Consider the following 111-residue polypeptide: Probable 4-amino-4-deoxy-L-arabinose-phosphoundecaprenol flippase subunit ArnE (111 aa).

A run of 3 helical transmembrane segments spans residues 39-59, 61-81, and 89-109; these read WLAI…WVLQ, VPVG…TLAA, and VSLR…CMGV. In terms of domain architecture, EamA spans 40–109; that stretch reads LAISLLLLGG…IVAGVMCMGV (70 aa).

Belongs to the ArnE family. In terms of assembly, heterodimer of ArnE and ArnF.

The protein resides in the cell inner membrane. Its pathway is bacterial outer membrane biogenesis; lipopolysaccharide biosynthesis. Translocates 4-amino-4-deoxy-L-arabinose-phosphoundecaprenol (alpha-L-Ara4N-phosphoundecaprenol) from the cytoplasmic to the periplasmic side of the inner membrane. The sequence is that of Probable 4-amino-4-deoxy-L-arabinose-phosphoundecaprenol flippase subunit ArnE from Sodalis glossinidius (strain morsitans).